The sequence spans 452 residues: Pup--protein ligase (452 aa).

Glu-9 is a Mg(2+) binding site. Residue Arg-53 participates in ATP binding. Tyr-55 contacts Mg(2+). The Proton acceptor role is filled by Asp-57. Glu-63 contacts Mg(2+). ATP-binding residues include Thr-66 and Trp-419.

It belongs to the Pup ligase/Pup deamidase family. Pup-conjugating enzyme subfamily.

The catalysed reaction is ATP + [prokaryotic ubiquitin-like protein]-L-glutamate + [protein]-L-lysine = ADP + phosphate + N(6)-([prokaryotic ubiquitin-like protein]-gamma-L-glutamyl)-[protein]-L-lysine.. It participates in protein degradation; proteasomal Pup-dependent pathway. It functions in the pathway protein modification; protein pupylation. In terms of biological role, catalyzes the covalent attachment of the prokaryotic ubiquitin-like protein modifier Pup to the proteasomal substrate proteins, thereby targeting them for proteasomal degradation. This tagging system is termed pupylation. The ligation reaction involves the side-chain carboxylate of the C-terminal glutamate of Pup and the side-chain amino group of a substrate lysine. In Acidothermus cellulolyticus (strain ATCC 43068 / DSM 8971 / 11B), this protein is Pup--protein ligase.